We begin with the raw amino-acid sequence, 206 residues long: Small ribosomal subunit protein uS4c (206 aa).

Positions 93-161 (MRLDNIVYRL…IEKNIELLDK (69 aa)) constitute an S4 RNA-binding domain.

This sequence belongs to the universal ribosomal protein uS4 family. As to quaternary structure, part of the 30S ribosomal subunit. Contacts protein S5. The interaction surface between S4 and S5 is involved in control of translational fidelity.

It is found in the plastid. Its function is as follows. One of the primary rRNA binding proteins, it binds directly to 16S rRNA where it nucleates assembly of the body of the 30S subunit. With S5 and S12 plays an important role in translational accuracy. The sequence is that of Small ribosomal subunit protein uS4c (rps4) from Euglena longa (Euglenophycean alga).